The chain runs to 246 residues: Phosphomannomutase (246 aa).

Asp13 serves as the catalytic Nucleophile. Mg(2+) is bound by residues Asp13 and Asp15. The active-site Proton donor/acceptor is Asp15. The alpha-D-mannose 1-phosphate site is built by Arg22, Arg124, Arg135, Arg142, Ser180, and Asp182. Positions 208, 220, and 225 each coordinate Mg(2+).

This sequence belongs to the eukaryotic PMM family. Homodimer. Mg(2+) is required as a cofactor. In terms of tissue distribution, expressed in roots, stems, leaves, flowers and immature fruits.

It localises to the cytoplasm. The enzyme catalyses alpha-D-mannose 1-phosphate = D-mannose 6-phosphate. It participates in nucleotide-sugar biosynthesis; GDP-alpha-D-mannose biosynthesis; alpha-D-mannose 1-phosphate from D-fructose 6-phosphate: step 2/2. In terms of biological role, catalyzes the interconversion of mannose-6-phosphate to mannose-1-phosphate, the precursor for the synthesis of GDP-mannose. GDP-mannose is an essential sugar nucleotide for the synthesis of D-mannose-containing cell wall polysaccharides (galactomannans and glucomannans), glycolipids, glycoproteins and the antioxidant L-ascorbate. Can complement the yeast temperature-sensitive mutant sec53-6. This Arabidopsis thaliana (Mouse-ear cress) protein is Phosphomannomutase.